Here is a 284-residue protein sequence, read N- to C-terminus: Bifunctional protein FolD (284 aa).

NADP(+) is bound by residues 164-166 (GTS) and Ile230.

Belongs to the tetrahydrofolate dehydrogenase/cyclohydrolase family. In terms of assembly, homodimer.

The catalysed reaction is (6R)-5,10-methylene-5,6,7,8-tetrahydrofolate + NADP(+) = (6R)-5,10-methenyltetrahydrofolate + NADPH. It catalyses the reaction (6R)-5,10-methenyltetrahydrofolate + H2O = (6R)-10-formyltetrahydrofolate + H(+). It functions in the pathway one-carbon metabolism; tetrahydrofolate interconversion. Its function is as follows. Catalyzes the oxidation of 5,10-methylenetetrahydrofolate to 5,10-methenyltetrahydrofolate and then the hydrolysis of 5,10-methenyltetrahydrofolate to 10-formyltetrahydrofolate. This Mycoplasma capricolum subsp. capricolum (strain California kid / ATCC 27343 / NCTC 10154) protein is Bifunctional protein FolD.